A 314-amino-acid polypeptide reads, in one-letter code: uncharacterized protein (314 aa).

2 disordered regions span residues 170-203 and 258-314; these read RSSM…NPDE and VGES…PKKR. A compositionally biased stretch (low complexity) spans 171-186; sequence SSMNSQSQMSESSFPT. Over residues 187 to 200 the composition is skewed to pro residues; it reads PIDPPPRIPHPPLN. A compositionally biased stretch (polar residues) spans 261-272; the sequence is SSRQGENTQNVH. Residues 289–303 are compositionally biased toward basic and acidic residues; it reads RFKDDARKSNEDEHM.

This is an uncharacterized protein from Arabidopsis thaliana (Mouse-ear cress).